Reading from the N-terminus, the 212-residue chain is Nodulation protein NolU (212 aa).

Its function is as follows. Regulates cultivar-specific nodulation of soybean. The sequence is that of Nodulation protein NolU (nolU) from Rhizobium fredii (Sinorhizobium fredii).